Reading from the N-terminus, the 658-residue chain is Deoxynucleoside triphosphate triphosphohydrolase SAMHD1 (658 aa).

A disordered region spans residues 23–68; the sequence is SQPRVSEVAMQSAPLEQPAKRPRCDGSPRTPPSTPPATANLSADDD. S49 bears the Phosphoserine mark. T52 carries the post-translational modification Phosphothreonine. S55 carries the phosphoserine modification. T56 carries the phosphothreonine modification. Phosphoserine occurs at positions 64 and 125. The SAM domain occupies 77–142; sequence WEPEDVCSFL…IECIQQLSQS (66 aa). GTP is bound by residues K148 and V149. A dGTP-binding site is contributed by N151. 3 residues coordinate GTP: D169, Q174, and R177. The dGTP site is built by L182 and V188. The HD domain occupies 196–348; that stretch reads RFEHSLGVGY…GIDVDKWDYF (153 aa). Residues H199, H238, and D239 each coordinate Mn(2+). Residues D239, H247, H265, and E266 each contribute to the dGTP site. H265 is an active-site residue. D343 is a Mn(2+) binding site. The dGTP site is built by Y347, D351, R365, R395, K397, N401, Y417, H419, and K420. GTP is bound by residues R494 and K498. Residue K509 forms a Glycyl lysine isopeptide (Lys-Gly) (interchain with G-Cter in SUMO2) linkage. Position 565 (K565) interacts with GTP. Residue K565 participates in dGTP binding. Residue T634 is modified to Phosphothreonine. Position 634 is a (Microbial infection) Phosphothreonine (T634).

It belongs to the SAMHD1 family. Homodimer; in absence of GTP and dNTP. Homotetramer; in GTP- and dNTP-bound form. Interacts with MRE11; leading to stimulate the exonuclease activity of MRE11. Interacts with RBBP8/CtIP. Interacts with RBBP8/CtIP. Interacts (via its C-terminus) with CD81. Zn(2+) serves as cofactor. In terms of processing, phosphorylation at Thr-634 by CDK1 acts as a switch to control deoxynucleoside triphosphate (dNTPase)-dependent and -independent functions. Phosphorylation at Thr-634 takes place in cycling cells: it reduces the stability of the homotetramer, impairing the dNTPase activity and subsequent ability to restrict infection by viruses. It also inhibits ability to suppress LINE-1 retrotransposon activity. In contrast, phosphorylation at Thr-634 promotes DNA end resection at stalled replication forks in response to DNA damage. Post-translationally, (Microbial infection) Phosphorylation at Thr-634 by mouse cytomegalovirus kinase M97 leads to a reduced level of dNTP hydrolase activity and the loss of viral restriction. Not phosphorylated by CDK1 at the C-terminus.

The protein localises to the nucleus. It localises to the chromosome. It carries out the reaction a 2'-deoxyribonucleoside 5'-triphosphate + H2O = a 2'-deoxyribonucleoside + triphosphate + H(+). The catalysed reaction is dATP + H2O = 2'-deoxyadenosine + triphosphate + H(+). The enzyme catalyses dCTP + H2O = 2'-deoxycytidine + triphosphate + H(+). It catalyses the reaction dGTP + H2O = 2'-deoxyguanosine + triphosphate + H(+). It carries out the reaction dTTP + H2O = thymidine + triphosphate + H(+). Its activity is regulated as follows. Allosterically activated and regulated via the combined actions of GTP and dNTPs (dATP, dGTP, dTTP and dCTP): Allosteric site 1 binds GTP, while allosteric site 2 binds dNTP. Allosteric activation promotes the formation of highly active homotetramers. Isoform 1: Phosphorylation at Thr-634 impairs homotetramerization, thereby inhibiting dNTPase activity, leading to reduced ability to restrict infection by viruses. Its function is as follows. Protein that acts both as a host restriction factor involved in defense response to virus and as a regulator of DNA end resection at stalled replication forks. Has deoxynucleoside triphosphate (dNTPase) activity, which is required to restrict infection by viruses: dNTPase activity reduces cellular dNTP levels to levels too low for retroviral reverse transcription to occur, blocking early-stage virus replication in dendritic and other myeloid cells. Likewise, suppresses LINE-1 retrotransposon activity. In addition to virus restriction, dNTPase activity acts as a regulator of DNA precursor pools by regulating dNTP pools. Phosphorylation at Thr-634 acts as a switch to control dNTPase-dependent and -independent functions: it inhibits dNTPase activity and ability to restrict infection by viruses, while it promotes DNA end resection at stalled replication forks. Functions during S phase at stalled DNA replication forks to promote the resection of gapped or reversed forks: acts by stimulating the exonuclease activity of MRE11, activating the ATR-CHK1 pathway and allowing the forks to restart replication. Its ability to promote degradation of nascent DNA at stalled replication forks is required to prevent induction of type I interferons, thereby preventing chronic inflammation. Ability to promote DNA end resection at stalled replication forks is independent of dNTPase activity. Enhances immunoglobulin hypermutation in B-lymphocytes by promoting transversion mutation. The polypeptide is Deoxynucleoside triphosphate triphosphohydrolase SAMHD1 (Mus musculus (Mouse)).